We begin with the raw amino-acid sequence, 390 residues long: Na(+)/H(+) antiporter NhaA (390 aa).

12 helical membrane-spanning segments follow: residues 14–34 (AAGG…ANLN), 61–81 (MLLW…GLEV), 97–117 (SLPV…YLAF), 126–146 (AGWA…LALL), 156–176 (VFLM…IALF), 181–201 (LSMV…VLNL), 221–241 (VLKS…FVPL), 256–276 (ALHP…NAGV), 280–300 (GVTL…GLFI), 305–325 (GISL…PPGV), 330–350 (ILAV…IASL), and 362–382 (WAKL…YALL).

This sequence belongs to the NhaA Na(+)/H(+) (TC 2.A.33) antiporter family.

Its subcellular location is the cell inner membrane. It catalyses the reaction Na(+)(in) + 2 H(+)(out) = Na(+)(out) + 2 H(+)(in). Its function is as follows. Na(+)/H(+) antiporter that extrudes sodium in exchange for external protons. The polypeptide is Na(+)/H(+) antiporter NhaA (Cronobacter sakazakii (strain ATCC BAA-894) (Enterobacter sakazakii)).